Here is a 287-residue protein sequence, read N- to C-terminus: Putative ankyrin repeat protein R791 (287 aa).

7 ANK repeats span residues 40-71 (HNFN…PLVF), 76-105 (NVHD…NIET), 107-134 (NDDV…IDNK), 135-164 (TIFE…DIKA), 165-194 (KDNF…TIDI), 196-224 (DDTY…DYRT), and 225-254 (VDDL…DIEA).

The sequence is that of Putative ankyrin repeat protein R791 from Acanthamoeba polyphaga (Amoeba).